The sequence spans 134 residues: Acyl-CoA thioester hydrolase YbgC (134 aa).

Residue D18 is part of the active site.

It belongs to the 4-hydroxybenzoyl-CoA thioesterase family.

The protein resides in the cell inner membrane. Functionally, thioesterase that appears to be involved in phospholipid metabolism. Some specific acyl-ACPs could be physiological substrates. Displays acyl-CoA thioesterase activity on malonyl-CoA in vitro, catalyzing the hydrolysis of the thioester bond. This Escherichia coli O157:H7 protein is Acyl-CoA thioester hydrolase YbgC (ybgC).